The primary structure comprises 457 residues: Cysteine--tRNA ligase (457 aa).

Cysteine 30 contacts Zn(2+). Residues 32–42 (PTVYDRAHLGN) carry the 'HIGH' region motif. Residues cysteine 213, histidine 238, and glutamate 242 each coordinate Zn(2+). Positions 271-275 (KMSKS) match the 'KMSKS' region motif. An ATP-binding site is contributed by lysine 274.

The protein belongs to the class-I aminoacyl-tRNA synthetase family. As to quaternary structure, monomer. Requires Zn(2+) as cofactor.

It is found in the cytoplasm. The enzyme catalyses tRNA(Cys) + L-cysteine + ATP = L-cysteinyl-tRNA(Cys) + AMP + diphosphate. The polypeptide is Cysteine--tRNA ligase (Ruegeria sp. (strain TM1040) (Silicibacter sp.)).